The sequence spans 434 residues: Glutamyl-tRNA reductase (434 aa).

Residues 57–60, Ser116, 121–123, and Gln127 contribute to the substrate site; these read TCNR and ETQ. Catalysis depends on Cys58, which acts as the Nucleophile. 196–201 provides a ligand contact to NADP(+); it reads GAGEMI.

It belongs to the glutamyl-tRNA reductase family. As to quaternary structure, homodimer.

The enzyme catalyses (S)-4-amino-5-oxopentanoate + tRNA(Glu) + NADP(+) = L-glutamyl-tRNA(Glu) + NADPH + H(+). It functions in the pathway porphyrin-containing compound metabolism; protoporphyrin-IX biosynthesis; 5-aminolevulinate from L-glutamyl-tRNA(Glu): step 1/2. In terms of biological role, catalyzes the NADPH-dependent reduction of glutamyl-tRNA(Glu) to glutamate 1-semialdehyde (GSA). The sequence is that of Glutamyl-tRNA reductase from Burkholderia pseudomallei (strain 1106a).